The sequence spans 274 residues: tRNA (mnm(5)s(2)U34)-methyltransferase, chloroplastic (274 aa).

The N-terminal 50 residues, 1 to 50 (MAAGFFQAEMSILSSTLARSYSLPIRKTLMTFDFRIAMQRNPCLRIRRSC), are a transit peptide targeting the chloroplast. Positions 108, 110, 134, 136, and 166 each coordinate S-adenosyl-L-methionine.

Belongs to the methyltransferase superfamily. MnmM family.

The protein localises to the plastid. It is found in the chloroplast. The catalysed reaction is 5-aminomethyl-2-thiouridine(34) in tRNA + S-adenosyl-L-methionine = 5-methylaminomethyl-2-thiouridine(34) in tRNA + S-adenosyl-L-homocysteine + H(+). Its pathway is tRNA modification. Functionally, involved in the biosynthesis of 5-methylaminomethyl-2-thiouridine (mnm(5)s(2)U) at the wobble position (U34) in tRNA. Catalyzes the transfer of a methyl group from S-adenosyl-L-methionine to nm(5)s(2)U34 to form mnm(5)s(2)U34. This chain is tRNA (mnm(5)s(2)U34)-methyltransferase, chloroplastic, found in Arabidopsis thaliana (Mouse-ear cress).